A 481-amino-acid chain; its full sequence is Argininosuccinate lyase (481 aa).

It belongs to the lyase 1 family. Argininosuccinate lyase subfamily.

It localises to the cytoplasm. It catalyses the reaction 2-(N(omega)-L-arginino)succinate = fumarate + L-arginine. Its pathway is amino-acid biosynthesis; L-arginine biosynthesis; L-arginine from L-ornithine and carbamoyl phosphate: step 3/3. In Methanococcus vannielii (strain ATCC 35089 / DSM 1224 / JCM 13029 / OCM 148 / SB), this protein is Argininosuccinate lyase.